The following is a 200-amino-acid chain: 3-isopropylmalate dehydratase small subunit (200 aa).

Belongs to the LeuD family. LeuD type 1 subfamily. Heterodimer of LeuC and LeuD.

It carries out the reaction (2R,3S)-3-isopropylmalate = (2S)-2-isopropylmalate. It participates in amino-acid biosynthesis; L-leucine biosynthesis; L-leucine from 3-methyl-2-oxobutanoate: step 2/4. Its function is as follows. Catalyzes the isomerization between 2-isopropylmalate and 3-isopropylmalate, via the formation of 2-isopropylmaleate. The chain is 3-isopropylmalate dehydratase small subunit from Campylobacter jejuni subsp. jejuni serotype O:23/36 (strain 81-176).